Consider the following 354-residue polypeptide: GRAM domain-containing protein 2A (354 aa).

Over residues 1 to 29 (MTALSRSEATEEGGNQQMHRKTASLNSPV) the composition is skewed to polar residues. A disordered region spans residues 1 to 46 (MTALSRSEATEEGGNQQMHRKTASLNSPVSCKEKPDRVEEPPDYSL). Over residues 31–40 (CKEKPDRVEE) the composition is skewed to basic and acidic residues. A GRAM domain is found at 72–139 (QQYHKLFKDV…VSVQMIKKHK (68 aa)). Residues 312-332 (LLKVFFVLICFLVMSSSYLAF) traverse the membrane as a helical segment.

It is found in the endoplasmic reticulum membrane. It localises to the cell membrane. In terms of biological role, participates in the organization of endoplasmic reticulum-plasma membrane contact sites (EPCS) with pleiotropic functions including STIM1 recruitment and calcium homeostasis. Constitutive tether that co-localize with ESYT2/3 tethers at endoplasmic reticulum-plasma membrane contact sites in a phosphatidylinositol lipid-dependent manner. Pre-marks the subset of phosphtidylinositol 4,5-biphosphate (PI(4,5)P2)-enriched EPCS destined for the store operated calcium entry pathway (SOCE). This Homo sapiens (Human) protein is GRAM domain-containing protein 2A.